Here is a 431-residue protein sequence, read N- to C-terminus: Anaerobic glycerol-3-phosphate dehydrogenase subunit B (431 aa).

The protein belongs to the anaerobic G-3-P dehydrogenase subunit B family. As to quaternary structure, composed of a catalytic GlpA/B dimer and of membrane bound GlpC. Requires FMN as cofactor.

It carries out the reaction a quinone + sn-glycerol 3-phosphate = dihydroxyacetone phosphate + a quinol. It participates in polyol metabolism; glycerol degradation via glycerol kinase pathway; glycerone phosphate from sn-glycerol 3-phosphate (anaerobic route): step 1/1. In terms of biological role, conversion of glycerol 3-phosphate to dihydroxyacetone. Uses fumarate or nitrate as electron acceptor. The chain is Anaerobic glycerol-3-phosphate dehydrogenase subunit B from Mannheimia succiniciproducens (strain KCTC 0769BP / MBEL55E).